Here is a 680-residue protein sequence, read N- to C-terminus: Harmonin-binding protein USHBP1 (680 aa).

Residues 1 to 15 (MSARATRPRSRRGRH) show a composition bias toward basic residues. Disordered stretches follow at residues 1–51 (MSAR…YLGP) and 134–161 (KSVEAEDRDQGAPGPFGDEKEDAGPGQQ). Residues 179-218 (NREDELACTQASLQDAQAEKETLQRQVQELEDSLMQMEAS) are a coiled coil. 2 disordered regions span residues 220 to 247 (PTPILRAGRRNSNSSTSGAERRPWVPQD) and 384 to 405 (TMEVETPQPSSEGSGVDKPTPE). Coiled coils occupy residues 363-386 (TKGDLQAAEKEASRLLMKKEATME) and 467-506 (QIQQDLAATRDRLADLVLRLQLTQREKRGLELREAALRAQ). The disordered stretch occupies residues 524-549 (FAGDGSSGGSSEDPSSEEEAGEDRQQ). The stretch at 573 to 662 (QELSASLARA…QAEELAVLTA (90 aa)) forms a coiled coil.

It belongs to the MCC family. As to quaternary structure, interacts via its C-terminus with the first PDZ domain of USH1C.

In Mus musculus (Mouse), this protein is Harmonin-binding protein USHBP1.